Reading from the N-terminus, the 1700-residue chain is Leucine-rich repeat-containing protein 37A2 (1700 aa).

An N-terminal signal peptide occupies residues 1 to 35 (MSSAQCPALVCVMSRLRFWGPWPLLMWQLLWLLVK). Topologically, residues 36 to 1582 (EAQPLEWVKD…VPGYGYTDKL (1547 aa)) are extracellular. Residues 54 to 65 (LGPPDSWSSHSS) are compositionally biased toward polar residues. 6 disordered regions span residues 54-104 (LGPP…ESTE), 130-156 (QQDLKDKLSPQERLPVSPKKLKKDPAQ), 169-534 (QLST…AQPP), 559-580 (TEVELSPTMKETPTQPPKKVVP), 619-642 (PEPTTEVGHSTPPKRTIVSPKHPE), and 729-752 (TKPTTEVKPSPTTEETSTQPPDLG). The stretch at 137–160 (LSPQERLPVSPKKLKKDPAQRWSL) is one LRR 1 repeat. 2 stretches are compositionally biased toward polar residues: residues 169–189 (QLSTPQSQKQTLQNEYSSTDT) and 223–237 (ETQNPETLEDIQSSS). LRR repeat units follow at residues 230-253 (LEDIQSSSLQQEAPAQLPQLLEEE) and 267-290 (ESSMESLTLPNHEVSVQPPGEDQA). Over residues 238–249 (LQQEAPAQLPQL) the composition is skewed to low complexity. A glycan (N-linked (GlcNAc...) asparagine) is linked at asparagine 296. Residues 307-326 (TITSEPTNETESSQAQQETP) are compositionally biased toward polar residues. Low complexity predominate over residues 358 to 368 (SEQQQPVQPSE). Residues 433 to 446 (LVHQEATTRLSGSG) show a composition bias toward polar residues. The span at 482 to 493 (SPEPINNENPSP) shows a compositional bias: low complexity. A compositionally biased stretch (low complexity) spans 729–749 (TKPTTEVKPSPTTEETSTQPP). 6 LRR repeats span residues 864–887 (NGTFTILNFQGNYISYIDGNVWKA), 888–911 (YSWTEKLILRENNLTELHKDSFEG), 912–935 (LLSLQYLDLSCNKIQSIERHTFEP), 937–959 (PFLKFINLSCNVITELSFGTFQA), 963–987 (MQFLHKLILNHNPLTTVEDPYLFKL), and 1002–1027 (LTTLKNILMMTVELEKLILPSHMACC). N-linked (GlcNAc...) asparagine glycosylation occurs at asparagine 1079. The LRR 10 repeat unit spans residues 1124–1146 (LPYFSAVNLDVKSLLLPFIKLPT). Composition is skewed to basic and acidic residues over residues 1182–1191 (VGRQSIRREQ) and 1201–1216 (AEEKRLGSPAPREVEQ). Disordered stretches follow at residues 1182–1227 (VGRQ…EKLA) and 1309–1328 (KTRSHVTHRTPKVKKSPKVR). A helical transmembrane segment spans residues 1583-1603 (ILALIVTGILTILIILFCLIV). At 1604 to 1700 (ICCHRRSLQE…TEEEESEALP (97 aa)) the chain is on the cytoplasmic side. The span at 1675 to 1685 (NEDKILNRDPG) shows a compositional bias: basic and acidic residues. A disordered region spans residues 1675 to 1700 (NEDKILNRDPGDSEAPTEEEESEALP). Positions 1689–1700 (APTEEEESEALP) are enriched in acidic residues.

The protein belongs to the LRRC37A family.

The protein resides in the membrane. This Homo sapiens (Human) protein is Leucine-rich repeat-containing protein 37A2 (LRRC37A2).